An 86-amino-acid chain; its full sequence is uncharacterized protein (86 aa).

This sequence to M.jannaschii MJ0526.1.

This is an uncharacterized protein from Methanothermobacter thermautotrophicus (strain ATCC 29096 / DSM 1053 / JCM 10044 / NBRC 100330 / Delta H) (Methanobacterium thermoautotrophicum).